A 401-amino-acid chain; its full sequence is tRNA(Met) cytidine acetate ligase (401 aa).

Residues 7–20 (IVEYNPFHNGHLYH), Gly102, Asn164, and Arg189 contribute to the ATP site.

It belongs to the TmcAL family.

Its subcellular location is the cytoplasm. It carries out the reaction cytidine(34) in elongator tRNA(Met) + acetate + ATP = N(4)-acetylcytidine(34) in elongator tRNA(Met) + AMP + diphosphate. Functionally, catalyzes the formation of N(4)-acetylcytidine (ac(4)C) at the wobble position of elongator tRNA(Met), using acetate and ATP as substrates. First activates an acetate ion to form acetyladenylate (Ac-AMP) and then transfers the acetyl group to tRNA to form ac(4)C34. The sequence is that of tRNA(Met) cytidine acetate ligase from Thermoanaerobacter pseudethanolicus (strain ATCC 33223 / 39E) (Clostridium thermohydrosulfuricum).